The following is a 173-amino-acid chain: Glutamyl-tRNA(Gln) amidotransferase subunit C-1, mitochondrial (173 aa).

A mitochondrion-targeting transit peptide spans 1 to 23; it reads MIRIPFRLRPPPGRTLHSLVRTF. Positions 51 to 70 are disordered; that stretch reads PSKVPQRPHKSTTTVGQSTP. Polar residues predominate over residues 61-70; it reads STTTVGQSTP.

It belongs to the GatC family. As to quaternary structure, subunit of the heterotrimeric GatCAB amidotransferase (AdT) complex, composed of A, B and C subunits.

The protein localises to the mitochondrion. The catalysed reaction is L-glutamyl-tRNA(Gln) + L-glutamine + ATP + H2O = L-glutaminyl-tRNA(Gln) + L-glutamate + ADP + phosphate + H(+). Allows the formation of correctly charged Gln-tRNA(Gln) through the transamidation of misacylated Glu-tRNA(Gln) in the mitochondria. The reaction takes place in the presence of glutamine and ATP through an activated gamma-phospho-Glu-tRNA(Gln). The chain is Glutamyl-tRNA(Gln) amidotransferase subunit C-1, mitochondrial from Culex quinquefasciatus (Southern house mosquito).